The primary structure comprises 569 residues: Ribonuclease J (569 aa).

Positions 81, 83, 85, 86, 150, and 172 each coordinate Zn(2+). 373–377 (HASGH) lines the substrate pocket. His399 is a binding site for Zn(2+).

It belongs to the metallo-beta-lactamase superfamily. RNA-metabolizing metallo-beta-lactamase-like family. Bacterial RNase J subfamily. As to quaternary structure, homodimer, may be a subunit of the RNA degradosome. It depends on Zn(2+) as a cofactor.

Its subcellular location is the cytoplasm. In terms of biological role, an RNase that has 5'-3' exonuclease and possibly endoonuclease activity. Involved in maturation of rRNA and in some organisms also mRNA maturation and/or decay. The polypeptide is Ribonuclease J (Mycoplasma pneumoniae (strain ATCC 29342 / M129 / Subtype 1) (Mycoplasmoides pneumoniae)).